Consider the following 316-residue polypeptide: Adenine deaminase (316 aa).

Zn(2+) is bound by residues His-14, His-16, and His-194. Glu-197 acts as the Proton donor in catalysis. Asp-275 is a Zn(2+) binding site. Asp-276 contacts substrate.

This sequence belongs to the metallo-dependent hydrolases superfamily. Adenosine and AMP deaminases family. Adenine deaminase type 2 subfamily. Zn(2+) serves as cofactor.

It carries out the reaction adenine + H2O + H(+) = hypoxanthine + NH4(+). Catalyzes the hydrolytic deamination of adenine to hypoxanthine. Plays an important role in the purine salvage pathway and in nitrogen catabolism. This Stutzerimonas stutzeri (strain A1501) (Pseudomonas stutzeri) protein is Adenine deaminase.